Consider the following 266-residue polypeptide: Putative carbamate hydrolase RutD (266 aa).

The region spanning 15–239 (PVVVLSAGLG…RVEMPWGGHA (225 aa)) is the AB hydrolase-1 domain.

The protein belongs to the AB hydrolase superfamily. Hydrolase RutD family.

The enzyme catalyses carbamate + 2 H(+) = NH4(+) + CO2. Functionally, involved in pyrimidine catabolism. May facilitate the hydrolysis of carbamate, a reaction that can also occur spontaneously. In Klebsiella variicola (strain At-22), this protein is Putative carbamate hydrolase RutD.